A 151-amino-acid chain; its full sequence is UPF0178 protein YaiI (151 aa).

Belongs to the UPF0178 family.

The sequence is that of UPF0178 protein YaiI from Salmonella enteritidis PT4 (strain P125109).